The chain runs to 327 residues: DNA-directed RNA polymerase subunit alpha (327 aa).

The interval 1-227 (MLIAHRPTLI…ELFGLARELN (227 aa)) is alpha N-terminal domain (alpha-NTD). Residues 244–327 (SDEDLRIPIE…GSYFDPNYGS (84 aa)) form an alpha C-terminal domain (alpha-CTD) region.

The protein belongs to the RNA polymerase alpha chain family. As to quaternary structure, homodimer. The RNAP catalytic core consists of 2 alpha, 1 beta, 1 beta' and 1 omega subunit. When a sigma factor is associated with the core the holoenzyme is formed, which can initiate transcription.

The enzyme catalyses RNA(n) + a ribonucleoside 5'-triphosphate = RNA(n+1) + diphosphate. Its function is as follows. DNA-dependent RNA polymerase catalyzes the transcription of DNA into RNA using the four ribonucleoside triphosphates as substrates. This Tropheryma whipplei (strain TW08/27) (Whipple's bacillus) protein is DNA-directed RNA polymerase subunit alpha.